We begin with the raw amino-acid sequence, 378 residues long: mRNA cap guanine-N(7) methyltransferase (378 aa).

Residues 24-331 (SRIFFMRNMN…MYLVFGFRKK (308 aa)) form the mRNA cap 0 methyltransferase domain. 33 to 34 (NN) contacts mRNA. S-adenosyl-L-methionine-binding residues include lysine 37, alanine 62, aspartate 84, aspartate 116, glutamine 138, and tyrosine 143. Basic and acidic residues-rich tracts occupy residues 335-347 (EKNL…EIKK) and 356-378 (DTDK…PSHC). The interval 335–378 (EKNLESEAPEIKKVTPVPLNEDTDKTAEKNEERIEEKEENPSHC) is disordered.

The protein belongs to the class I-like SAM-binding methyltransferase superfamily. mRNA cap 0 methyltransferase family.

The protein localises to the nucleus. It carries out the reaction a 5'-end (5'-triphosphoguanosine)-ribonucleoside in mRNA + S-adenosyl-L-methionine = a 5'-end (N(7)-methyl 5'-triphosphoguanosine)-ribonucleoside in mRNA + S-adenosyl-L-homocysteine. Functionally, mRNA-capping methyltransferase that methylates the N7 position of the added guanosine to the 5'-cap structure of mRNAs. Binds RNA containing 5'-terminal GpppC. The protein is mRNA cap guanine-N(7) methyltransferase of Caenorhabditis briggsae.